A 259-amino-acid chain; its full sequence is Global transcriptional regulator CodY (259 aa).

The GAF domain stretch occupies residues 1 to 155; it reads MALLQKTRII…GATVVGMEIL (155 aa). The H-T-H motif DNA-binding region spans 203–222; the sequence is ASKIADRVGITRSVIVNALR. Serine 215 carries the phosphoserine modification.

Belongs to the CodY family.

Its subcellular location is the cytoplasm. Functionally, DNA-binding global transcriptional regulator which is involved in the adaptive response to starvation and acts by directly or indirectly controlling the expression of numerous genes in response to nutrient availability. During rapid exponential growth, CodY is highly active and represses genes whose products allow adaptation to nutrient depletion. This chain is Global transcriptional regulator CodY, found in Bacillus velezensis (strain DSM 23117 / BGSC 10A6 / LMG 26770 / FZB42) (Bacillus amyloliquefaciens subsp. plantarum).